Reading from the N-terminus, the 127-residue chain is Secreted RxLR effector protein 3 (127 aa).

A signal peptide spans Met-1–Ala-20. The RxLR-dEER motif lies at Arg-30–Arg-48.

The protein belongs to the RxLR effector family.

It is found in the secreted. The protein localises to the host cell. In terms of biological role, secreted effector that partially suppresses elicitor-induced cell death in host and enhances virulence of P.parasitica. This is Secreted RxLR effector protein 3 from Phytophthora nicotianae (Potato buckeye rot agent).